We begin with the raw amino-acid sequence, 99 residues long: Large ribosomal subunit protein bL21 (99 aa).

It belongs to the bacterial ribosomal protein bL21 family. Part of the 50S ribosomal subunit. Contacts protein L20.

Its function is as follows. This protein binds to 23S rRNA in the presence of protein L20. This is Large ribosomal subunit protein bL21 from Anaplasma phagocytophilum (strain HZ).